The primary structure comprises 178 residues: ATP synthase subunit delta (178 aa).

This sequence belongs to the ATPase delta chain family. In terms of assembly, F-type ATPases have 2 components, F(1) - the catalytic core - and F(0) - the membrane proton channel. F(1) has five subunits: alpha(3), beta(3), gamma(1), delta(1), epsilon(1). F(0) has three main subunits: a(1), b(2) and c(10-14). The alpha and beta chains form an alternating ring which encloses part of the gamma chain. F(1) is attached to F(0) by a central stalk formed by the gamma and epsilon chains, while a peripheral stalk is formed by the delta and b chains.

It localises to the cell membrane. Functionally, f(1)F(0) ATP synthase produces ATP from ADP in the presence of a proton or sodium gradient. F-type ATPases consist of two structural domains, F(1) containing the extramembraneous catalytic core and F(0) containing the membrane proton channel, linked together by a central stalk and a peripheral stalk. During catalysis, ATP synthesis in the catalytic domain of F(1) is coupled via a rotary mechanism of the central stalk subunits to proton translocation. This protein is part of the stalk that links CF(0) to CF(1). It either transmits conformational changes from CF(0) to CF(1) or is implicated in proton conduction. The polypeptide is ATP synthase subunit delta (Buchnera aphidicola subsp. Baizongia pistaciae (strain Bp)).